We begin with the raw amino-acid sequence, 562 residues long: Phosphoglucomutase-1 (562 aa).

Met1 bears the N-acetylmethionine mark. An N6-acetyllysine modification is found at Lys16. Arg23 serves as a coordination point for alpha-D-glucose 1,6-bisphosphate. Thr115 carries the phosphothreonine modification. Ser117 contacts alpha-D-glucose 1,6-bisphosphate. The active-site Phosphoserine intermediate is Ser117. Ser117 contacts Mg(2+). Residues Ser117 and Ser134 each carry the phosphoserine modification. The residue at position 185 (Thr185) is a Phosphothreonine. Phosphoserine is present on Ser213. 3 residues coordinate Mg(2+): Asp288, Asp290, and Asp292. The alpha-D-glucose 1,6-bisphosphate site is built by Asp292 and Arg293. Residue Lys349 is modified to N6-acetyllysine. Tyr353 is modified (phosphotyrosine). Thr357 provides a ligand contact to alpha-D-glucose 1,6-bisphosphate. Phosphoserine is present on Ser369. Residues Glu376, Ser378, and Lys389 each contribute to the alpha-D-glucose 1,6-bisphosphate site. A Phosphoserine modification is found at Ser378. N6-succinyllysine is present on Lys419. Thr467 bears the Phosphothreonine; by PAK1 mark. Residues Ser485 and Ser505 each carry the phosphoserine modification. Thr507 is modified (phosphothreonine). 2 positions are modified to phosphoserine: Ser509 and Ser541.

This sequence belongs to the phosphohexose mutase family. Monomer. It depends on Mg(2+) as a cofactor. In terms of processing, isoform 2 is the major calmodulin-dependent phosphoprotein in junctional skeletal sarcoplasmic reticulum vesicles. Phosphorylation at Thr-467 by PAK1 significantly enhances enzymatic activity.

The protein localises to the cytoplasm. The protein resides in the sarcoplasmic reticulum. The catalysed reaction is alpha-D-glucose 1-phosphate = alpha-D-glucose 6-phosphate. It carries out the reaction O-phospho-L-seryl-[protein] + alpha-D-glucose 1-phosphate = alpha-D-glucose 1,6-bisphosphate + L-seryl-[protein]. It catalyses the reaction alpha-D-glucose 1,6-bisphosphate + L-seryl-[protein] = O-phospho-L-seryl-[protein] + alpha-D-glucose 6-phosphate. Its activity is regulated as follows. Glucose-1,6-bisphosphate enhances phosphorylation of the active site Ser-117, and thereby increases enzyme activity. Functionally, catalyzes the reversible isomerization of alpha-D-glucose 1-phosphate to alpha-D-glucose 6-phosphate. The mechanism proceeds via the intermediate compound alpha-D-glucose 1,6-bisphosphate. This enzyme participates in both the breakdown and synthesis of glucose. The chain is Phosphoglucomutase-1 (PGM1) from Oryctolagus cuniculus (Rabbit).